Here is a 110-residue protein sequence, read N- to C-terminus: SOSS complex subunit C (110 aa).

The protein belongs to the SOSS-C family. As to quaternary structure, belongs to the multiprotein complex Integrator. Component of the SOSS complex, composed of soss-b (soss-b1/nabp2 or soss-b2/nabp1), soss-a/ints3 and soss-c/inip.

The protein localises to the nucleus. Its function is as follows. Component of the SOSS complex, a multiprotein complex that functions downstream of the MRN complex to promote DNA repair and G2/M checkpoint. The SOSS complex associates with single-stranded DNA at DNA lesions and influences diverse endpoints in the cellular DNA damage response including cell-cycle checkpoint activation, recombinational repair and maintenance of genomic stability. Required for efficient homologous recombination-dependent repair of double-strand breaks (DSBs). The protein is SOSS complex subunit C (inip) of Xenopus laevis (African clawed frog).